A 394-amino-acid chain; its full sequence is Muscle cell intermediate filament protein AV71 (394 aa).

The coil 1B stretch occupies residues 1–73 (AEINLVRRRV…RVHDQEITEL (73 aa)). The IF rod domain maps to 1-239 (AEINLVRRRV…KMLEGEENRA (239 aa)). Residues 74–91 (QAMAARDTTPENREYFKN) form a linker 12 region. Residues 92 to 239 (ELSSAIRDIR…KMLEGEENRA (148 aa)) form a coil 2 region. Residues 240-394 (GLRQLVEQVV…HIQRSSHTIN (155 aa)) are tail. Residues 272 to 389 (SRTSFQRSAK…EERASHIQRS (118 aa)) enclose the LTD domain.

This sequence belongs to the intermediate filament family.

The chain is Muscle cell intermediate filament protein AV71 (AV71) from Acanthocheilonema viteae (Filarial nematode worm).